The following is a 322-amino-acid chain: Fructose-1,6-bisphosphatase class 1 (322 aa).

Residues Glu-84, Asp-103, Leu-105, and Asp-106 each coordinate Mg(2+). Substrate-binding positions include 106-109, Asn-198, and Lys-264; that span reads DGSS. Glu-270 lines the Mg(2+) pocket.

This sequence belongs to the FBPase class 1 family. As to quaternary structure, homotetramer. Requires Mg(2+) as cofactor.

It is found in the cytoplasm. It carries out the reaction beta-D-fructose 1,6-bisphosphate + H2O = beta-D-fructose 6-phosphate + phosphate. It functions in the pathway carbohydrate biosynthesis; gluconeogenesis. This is Fructose-1,6-bisphosphatase class 1 from Saccharophagus degradans (strain 2-40 / ATCC 43961 / DSM 17024).